We begin with the raw amino-acid sequence, 213 residues long: MQPRRIARELALLSLSQLPAKAEPPSDQMLSELLLAATRTLAAEARDHLEAASAELKQSSDRLLLSTLGSADLESSRAMLQEVIEMAQAAINRTGNALDLPEWVQLTDREEVRKFGGRLVLQVSNNRERIDRTLNDVMVDWQLHRVPRLDQDILRLAAAEILFLGTPEQVAINEAVELANRYSDEEGRRFINGVLRRLSTMLGKAARAARPSS.

This sequence belongs to the NusB family.

In terms of biological role, involved in transcription antitermination. Required for transcription of ribosomal RNA (rRNA) genes. Binds specifically to the boxA antiterminator sequence of the ribosomal RNA (rrn) operons. The polypeptide is Transcription antitermination protein NusB (Synechococcus elongatus (strain ATCC 33912 / PCC 7942 / FACHB-805) (Anacystis nidulans R2)).